The following is a 429-amino-acid chain: Dihydroorotase (429 aa).

Zn(2+) contacts are provided by histidine 62 and histidine 64. Residues 64 to 66 and asparagine 96 contribute to the substrate site; that span reads HFR. Zn(2+) is bound by residues aspartate 154, histidine 181, and histidine 234. Substrate is bound at residue asparagine 280. Residue aspartate 307 participates in Zn(2+) binding. Residue aspartate 307 is part of the active site. Substrate-binding positions include histidine 311 and 325–326; that span reads FG.

This sequence belongs to the metallo-dependent hydrolases superfamily. DHOase family. Class I DHOase subfamily. It depends on Zn(2+) as a cofactor.

It carries out the reaction (S)-dihydroorotate + H2O = N-carbamoyl-L-aspartate + H(+). The protein operates within pyrimidine metabolism; UMP biosynthesis via de novo pathway; (S)-dihydroorotate from bicarbonate: step 3/3. In terms of biological role, catalyzes the reversible cyclization of carbamoyl aspartate to dihydroorotate. This chain is Dihydroorotase, found in Latilactobacillus sakei subsp. sakei (strain 23K) (Lactobacillus sakei subsp. sakei).